We begin with the raw amino-acid sequence, 98 residues long: Small ribosomal subunit protein uS17B (98 aa).

Belongs to the universal ribosomal protein uS17 family. As to quaternary structure, part of the 30S ribosomal subunit.

Its function is as follows. One of the primary rRNA binding proteins, it binds specifically to the 5'-end of 16S ribosomal RNA. The chain is Small ribosomal subunit protein uS17B from Bacteroides thetaiotaomicron (strain ATCC 29148 / DSM 2079 / JCM 5827 / CCUG 10774 / NCTC 10582 / VPI-5482 / E50).